The chain runs to 140 residues: Active regulator of SIRT1 (140 aa).

Disordered regions lie at residues 1-52 and 95-123; these read MSAS…KNKA and QQVL…EGTV. A compositionally biased stretch (basic and acidic residues) spans 108–120; it reads DRPAEKKEKKKPE.

This sequence belongs to the AROS family. In terms of assembly, part of the small subunit (SSU) processome, composed of more than 70 proteins and the RNA chaperone small nucleolar RNA (snoRNA) U3.

It is found in the nucleus. Its subcellular location is the nucleolus. Functionally, part of the small subunit (SSU) processome, first precursor of the small eukaryotic ribosomal subunit. During the assembly of the SSU processome in the nucleolus, many ribosome biogenesis factors, an RNA chaperone and ribosomal proteins associate with the nascent pre-rRNA and work in concert to generate RNA folding, modifications, rearrangements and cleavage as well as targeted degradation of pre-ribosomal RNA by the RNA exosome. Acts as a chaperone that specifically mediates the integration of RPS19 in state post-A1. Direct regulator of SIRT1. The sequence is that of Active regulator of SIRT1 (RPS19BP1) from Gallus gallus (Chicken).